Consider the following 279-residue polypeptide: Ribosome maturation factor RimP (279 aa).

The tract at residues 197-279 (LAEEGEPEEQ…GAPALRPTPK (83 aa)) is disordered. Acidic residues predominate over residues 199 to 210 (EEGEPEEQEEGG).

The protein belongs to the RimP family.

It localises to the cytoplasm. Functionally, required for maturation of 30S ribosomal subunits. This is Ribosome maturation factor RimP from Methylocella silvestris (strain DSM 15510 / CIP 108128 / LMG 27833 / NCIMB 13906 / BL2).